A 147-amino-acid polypeptide reads, in one-letter code: Transthyretin (147 aa).

An N-terminal signal peptide occupies residues 1–20 (MASHRLLLLCLAGLVFVSEA). Position 30 is a sulfocysteine (cysteine 30). Lysine 35 contributes to the L-thyroxine binding site. The residue at position 62 (glutamate 62) is a 4-carboxyglutamate. At serine 72 the chain carries Phosphoserine. Glutamate 74 is a binding site for L-thyroxine. Asparagine 118 is a glycosylation site (N-linked (GlcNAc...) asparagine). Serine 137 lines the L-thyroxine pocket.

It belongs to the transthyretin family. Homotetramer. Dimer of dimers. In the homotetramer, subunits assemble around a central channel that can accommodate two ligand molecules. Interacts with RBP4. Sulfonation of the reactive cysteine Cys-30 enhances the stability of the native conformation of TTR, avoiding misassembly of the protein leading to amyloid formation. In terms of tissue distribution, detected in brain.

The protein localises to the secreted. In terms of biological role, thyroid hormone-binding protein. Probably transports thyroxine from the bloodstream to the brain. This Pan troglodytes (Chimpanzee) protein is Transthyretin (TTR).